Here is a 406-residue protein sequence, read N- to C-terminus: Formate-dependent phosphoribosylglycinamide formyltransferase (406 aa).

N(1)-(5-phospho-beta-D-ribosyl)glycinamide contacts are provided by residues 27–28 (EL) and E87. ATP is bound by residues R120, K162, 167–172 (SSGKGQ), 202–205 (EGFI), and E210. The region spanning 125–320 (RLAAETLGLP…EFELHARALL (196 aa)) is the ATP-grasp domain. Residues E279 and E291 each coordinate Mg(2+). Residues D298, K367, and 374–375 (RR) contribute to the N(1)-(5-phospho-beta-D-ribosyl)glycinamide site.

The protein belongs to the PurK/PurT family. As to quaternary structure, homodimer.

It catalyses the reaction N(1)-(5-phospho-beta-D-ribosyl)glycinamide + formate + ATP = N(2)-formyl-N(1)-(5-phospho-beta-D-ribosyl)glycinamide + ADP + phosphate + H(+). It functions in the pathway purine metabolism; IMP biosynthesis via de novo pathway; N(2)-formyl-N(1)-(5-phospho-D-ribosyl)glycinamide from N(1)-(5-phospho-D-ribosyl)glycinamide (formate route): step 1/1. Its function is as follows. Involved in the de novo purine biosynthesis. Catalyzes the transfer of formate to 5-phospho-ribosyl-glycinamide (GAR), producing 5-phospho-ribosyl-N-formylglycinamide (FGAR). Formate is provided by PurU via hydrolysis of 10-formyl-tetrahydrofolate. This chain is Formate-dependent phosphoribosylglycinamide formyltransferase, found in Bordetella bronchiseptica (strain ATCC BAA-588 / NCTC 13252 / RB50) (Alcaligenes bronchisepticus).